We begin with the raw amino-acid sequence, 220 residues long: Claudin-24 (220 aa).

The Cytoplasmic portion of the chain corresponds to 1–10; the sequence is MALIFRTAMQ. Residues 11-31 traverse the membrane as a helical segment; sequence SVGLLLSLLGWILSIITTYLP. Residues 32-81 are Extracellular-facing; it reads HWKNLNLDLNEMENWTMGLWQTCVIQEEVGMQCKDFDSFLALPAELRVSR. The helical transmembrane segment at 82–102 threads the bilayer; the sequence is ILMFLSNGLGFLGLLVSGFGL. At 103–117 the chain is on the cytoplasmic side; it reads DCLRIGESQRDLKRR. The helical transmembrane segment at 118–138 threads the bilayer; the sequence is LLILGGILSWASGITALVPVS. The Extracellular segment spans residues 139-161; it reads WVAHKTVQEFWDENVPDFVPRWE. Residues 162–182 form a helical membrane-spanning segment; the sequence is FGEALFLGWFAGLSLLLGGCL. Residues 183–220 lie on the Cytoplasmic side of the membrane; it reads LNCAACSSHAPLALGHYAVAQMQTQCPYLEDGTADPQV.

The protein belongs to the claudin family.

Its subcellular location is the cell junction. The protein resides in the tight junction. It localises to the cell membrane. Functionally, plays a major role in tight junction-specific obliteration of the intercellular space, through calcium-independent cell-adhesion activity. The sequence is that of Claudin-24 from Homo sapiens (Human).